Consider the following 130-residue polypeptide: Small ribosomal subunit protein uS11 (130 aa).

This sequence belongs to the universal ribosomal protein uS11 family. In terms of assembly, part of the 30S ribosomal subunit. Interacts with proteins S7 and S18. Binds to IF-3.

Located on the platform of the 30S subunit, it bridges several disparate RNA helices of the 16S rRNA. Forms part of the Shine-Dalgarno cleft in the 70S ribosome. This chain is Small ribosomal subunit protein uS11, found in Synechococcus sp. (strain CC9605).